We begin with the raw amino-acid sequence, 757 residues long: Chloride channel protein C (757 aa).

Topologically, residues 1–96 (MGSSLNKPLS…LHLKKTFGKW (96 aa)) are cytoplasmic. 11 helical membrane-spanning segments follow: residues 97–117 (IICL…KMVV), 141–161 (FLTF…MVIV), 196–216 (IVSL…GPMI), 253–273 (FISI…IGGV), 292–312 (TFFT…GIGS), 337–357 (LLCF…FVFL), 378–398 (FEAL…SFIF), 462–482 (LLVF…LWVA), 484–504 (GLFV…GQTI), 506–526 (MWFT…AMMA), and 535–555 (IVVI…IILA). 2 consecutive CBS domains span residues 600 to 667 (MSKN…TGEE) and 710 to 757 (MNSS…NDLF).

The protein belongs to the chloride channel (TC 2.A.49) family.

It localises to the membrane. Voltage-gated chloride channel. Chloride channels may have several functions including the regulation of cell volume, membrane potential stabilization and signal transduction. The sequence is that of Chloride channel protein C (clcC) from Dictyostelium discoideum (Social amoeba).